We begin with the raw amino-acid sequence, 245 residues long: MRQKLVIGNWKMHGSLAANAALLEGIKAGAAKATLAVCAPFPYLAQCQALLNGSQVAWGAQDVSAEARGAFTGEVSASMVGEFGCTYVLVGHSERRTYHGETDQTVAAKALRALEFGIVPVVCVGETLAQREAGETEAVVGRQLQAVLDALTVEQLSRVVLAYEPVWAIGTGKTATSEQAQAVHAFLRGQVAARDAGVAERMAILYGGSVKPDNAAELFSMTDIDGGLIGGASLKSADFLAIGNA.

Position 9-11 (9-11 (NWK)) interacts with substrate. H92 acts as the Electrophile in catalysis. E164 functions as the Proton acceptor in the catalytic mechanism. Substrate contacts are provided by residues G170, S209, and 230–231 (GG).

The protein belongs to the triosephosphate isomerase family. As to quaternary structure, homodimer.

The protein resides in the cytoplasm. It catalyses the reaction D-glyceraldehyde 3-phosphate = dihydroxyacetone phosphate. It functions in the pathway carbohydrate biosynthesis; gluconeogenesis. The protein operates within carbohydrate degradation; glycolysis; D-glyceraldehyde 3-phosphate from glycerone phosphate: step 1/1. In terms of biological role, involved in the gluconeogenesis. Catalyzes stereospecifically the conversion of dihydroxyacetone phosphate (DHAP) to D-glyceraldehyde-3-phosphate (G3P). In Cupriavidus necator (strain ATCC 17699 / DSM 428 / KCTC 22496 / NCIMB 10442 / H16 / Stanier 337) (Ralstonia eutropha), this protein is Triosephosphate isomerase.